The chain runs to 219 residues: Agamous-like MADS-box protein AGL19 (219 aa).

An MADS-box domain is found at 1-61 (MVRGKTEMKR…SKLYEFSSSS (61 aa)). The tract at residues 77 to 96 (GNNHKRNDNSQQARDETSGL) is disordered. Residues 86–176 (SQQARDETSG…KEKWLGMGTA (91 aa)) form the K-box domain.

Interacts with SOC1 and AGL21. In terms of tissue distribution, mostly expressed in the outer layers of the root meristem (lateral root cap and epidermis) and in the central cylinder cells of mature roots. Also present in rosette leaves and seedlings and, to a lesser extent, in cauline leaves and flowers. Enriched in apices including the shoot apical meristem and developing leaf primordia.

It localises to the nucleus. Its function is as follows. Probable transcription factor that promotes flowering, especially in response to vernalization by short periods of cold, in an FLC-inpedendent manner. The polypeptide is Agamous-like MADS-box protein AGL19 (AGL19) (Arabidopsis thaliana (Mouse-ear cress)).